A 747-amino-acid polypeptide reads, in one-letter code: Oxysterol-binding protein-related protein 11 (747 aa).

Methionine 1 is subject to N-acetylmethionine. Positions 1-50 (MQGGEPVSTMKVSESEGKLEGQATAVTPNKNSSCGGGISSSSSSRGGSAK) are disordered. At serine 15 the chain carries Phosphoserine. Threonine 27 is modified (phosphothreonine). The PH domain occupies 58 to 155 (MENVYGYLMK…WVSRLQICTQ (98 aa)). Position 62 is a phosphotyrosine (tyrosine 62). Positions 158 to 188 (TEAIGKNNPPLKSRSFSLASSSNSPISQRRP) are disordered. Over residues 170–184 (SRSFSLASSSNSPIS) the composition is skewed to low complexity. Residues serine 172, serine 174, serine 177, serine 181, serine 184, and serine 189 each carry the phosphoserine modification. Residues 689 to 713 (EIDKATEHKHTLEERQRTEERHRTE) show a composition bias toward basic and acidic residues. The tract at residues 689–714 (EIDKATEHKHTLEERQRTEERHRTET) is disordered.

It belongs to the OSBP family. Heterodimer with OSBPL9. Present at highest levels in ovary, testis, kidney, liver, stomach, brain, and adipose tissue. Strong expression (at protein level) in epithelial cells of kidney tubules, testicular tubules, caecum, and skin. Present at low levels in subcutaneous and visceral adipose tissue (at protein level).

It localises to the late endosome membrane. The protein resides in the golgi apparatus. The protein localises to the trans-Golgi network membrane. The enzyme catalyses a 1,2-diacyl-sn-glycero-3-phospho-(1D-myo-inositol 4-phosphate)(out) + a 1,2-diacyl-sn-glycero-3-phospho-L-serine(in) = a 1,2-diacyl-sn-glycero-3-phospho-(1D-myo-inositol 4-phosphate)(in) + a 1,2-diacyl-sn-glycero-3-phospho-L-serine(out). In terms of biological role, plays a role in regulating ADIPOQ and FABP4 levels in differentiating adipocytes and is also involved in regulation of adipocyte triglyceride storage. Weakly binds 25-hydroxycholesterol. Interacts with OSBPL9 to function as lipid transfer proteins. Together they form a heterodimer that localizes at the ER-trans-Golgi membrane contact sites, and exchanges phosphatidylserine (1,2-diacyl-sn-glycero-3-phospho-L-serine, PS) for phosphatidylinositol-4-phosphate (1,2-diacyl-sn-glycero-3-phospho-(1D-myo-inositol 4-phosphate), PI(4)P) between the two organelles, a step that is critical for sphingomyelin synthesis in the Golgi complex. This Homo sapiens (Human) protein is Oxysterol-binding protein-related protein 11 (OSBPL11).